Reading from the N-terminus, the 214-residue chain is Orotidine 5'-phosphate decarboxylase (214 aa).

Residues Asp11, Lys33, 59-68 (DFKIADIPNT), Ser114, 164-174 (PGIGSQGGRAS), Gly187, and Arg188 contribute to the substrate site. Lys61 serves as the catalytic Proton donor.

This sequence belongs to the OMP decarboxylase family. Type 1 subfamily. In terms of assembly, homodimer.

The catalysed reaction is orotidine 5'-phosphate + H(+) = UMP + CO2. It functions in the pathway pyrimidine metabolism; UMP biosynthesis via de novo pathway; UMP from orotate: step 2/2. Its function is as follows. Catalyzes the decarboxylation of orotidine 5'-monophosphate (OMP) to uridine 5'-monophosphate (UMP). This Thermoplasma acidophilum (strain ATCC 25905 / DSM 1728 / JCM 9062 / NBRC 15155 / AMRC-C165) protein is Orotidine 5'-phosphate decarboxylase.